Consider the following 509-residue polypeptide: MKGNEFRNQTQTTIKNELAEWSDNSNNSQVDYASNAPSGDHVLVDWDGPNDPKNPKNWPHSAFLIHTILVSMLCLAGNLATTMYAPGAAQLAVEFKTRDTTTIALTVSIYLLGFALAPMVTSPLSEVYGRLIVYHTSNIFFLGFNLACAFSSNIGMFIAFRFLAGCAGSAPMTVGGGTIADFAASPEKNNTALRLFALGPLLGPVIGPIVGGFVAENIGWRWTFRIMSIVIAVLSILSCIFLRETSAAAILGRRGARITKETGKPFMIPGPMPGMPPKPQQPTKEIVSRSLVRPMKMLIFLPQVLILSFYTAFVFGLIYLLFTTFPAVFEGQYGFSPGVSGLSYIGIGFGMVGALFLFNFINMKMSNRTDKHGQLIPESYLPLMTWFSPLLPIGFFWYGWSADKQTHWVVPILGTFFVGFGSFAIIMPTTAYLVYAQGPQGAASVLAASNMMRYVFAAFLPLAGQNMYDQLGLGWGNSLLGFLCVVLAPVPAIFQRYGHYLRERFPTEF.

2 N-linked (GlcNAc...) asparagine glycosylation sites follow: N8 and N26. The next 4 membrane-spanning stretches (helical) occupy residues 63-83 (FLIH…ATTM), 103-123 (IALT…VTSP), 139-159 (IFFL…MFIA), and 162-182 (FLAG…IADF). N189 carries N-linked (GlcNAc...) asparagine glycosylation. 4 helical membrane passes run 195–215 (LFAL…GFVA), 222–242 (WTFR…CIFL), 298–318 (LIFL…FGLI), and 341–361 (GLSY…FNFI). N367 is a glycosylation site (N-linked (GlcNAc...) asparagine). A run of 4 helical transmembrane segments spans residues 380 to 400 (YLPL…WYGW), 408 to 428 (WVVP…IIMP), 442 to 462 (AASV…FLPL), and 474 to 494 (GWGN…PAIF).

It belongs to the major facilitator superfamily.

The protein resides in the cell membrane. Functionally, efflux pump that might be required for efficient secretion of fusaridione A or other secondary metabolies produced by the fusaridione A gene cluster. The sequence is that of MFS transporter fsdG from Fusarium heterosporum.